A 234-amino-acid chain; its full sequence is Thymidylate kinase (234 aa).

Residue Gly-20–Thr-27 participates in ATP binding.

The protein belongs to the thymidylate kinase family.

It catalyses the reaction dTMP + ATP = dTDP + ADP. Phosphorylation of dTMP to form dTDP in both de novo and salvage pathways of dTTP synthesis. This chain is Thymidylate kinase, found in Mycoplasmopsis pulmonis (strain UAB CTIP) (Mycoplasma pulmonis).